We begin with the raw amino-acid sequence, 688 residues long: Two-component response regulator ORR23 (688 aa).

The Response regulatory domain occupies 25–140; it reads RVLAVDDDPV…ELRNIWQHVI (116 aa). The residue at position 76 (Asp76) is a 4-aspartylphosphate. The segment at 161 to 212 is disordered; the sequence is PPNADSDHVHGHVTCGSPDQSGRPSKKRKEYCSEEEDEGEVNTQDIDDPSAP. The segment covering 193–208 has biased composition (acidic residues); the sequence is SEEEDEGEVNTQDIDD. Residues 211–270 constitute a DNA-binding region (myb-like GARP); sequence APKKPRVVWSVELHRKFVAAVNQLGIDKAVPKRILELMNVEKLTRENVASHLQKYRLYLK.

It belongs to the ARR family. Type-B subfamily. In terms of processing, two-component system major event consists of a His-to-Asp phosphorelay between a sensor histidine kinase (HK) and a response regulator (RR). In plants, the His-to-Asp phosphorelay involves an additional intermediate named Histidine-containing phosphotransfer protein (HPt). This multistep phosphorelay consists of a His-Asp-His-Asp sequential transfer of a phosphate group between first a His and an Asp of the HK protein, followed by the transfer to a conserved His of the HPt protein and finally the transfer to an Asp in the receiver domain of the RR protein.

The protein resides in the nucleus. Transcriptional activator that binds specific DNA sequence. Functions as a response regulator involved in His-to-Asp phosphorelay signal transduction system. Phosphorylation of the Asp residue in the receiver domain activates the ability of the protein to promote the transcription of target genes. May directly activate some type-A response regulators in response to cytokinins. This is Two-component response regulator ORR23 from Oryza sativa subsp. japonica (Rice).